The primary structure comprises 370 residues: UDP-N-acetylglucosamine--N-acetylmuramyl-(pentapeptide) pyrophosphoryl-undecaprenol N-acetylglucosamine transferase (370 aa).

UDP-N-acetyl-alpha-D-glucosamine-binding positions include T15–G17, N129, R170, S199, I254, and Q299.

The protein belongs to the glycosyltransferase 28 family. MurG subfamily.

The protein resides in the cell inner membrane. The enzyme catalyses di-trans,octa-cis-undecaprenyl diphospho-N-acetyl-alpha-D-muramoyl-L-alanyl-D-glutamyl-meso-2,6-diaminopimeloyl-D-alanyl-D-alanine + UDP-N-acetyl-alpha-D-glucosamine = di-trans,octa-cis-undecaprenyl diphospho-[N-acetyl-alpha-D-glucosaminyl-(1-&gt;4)]-N-acetyl-alpha-D-muramoyl-L-alanyl-D-glutamyl-meso-2,6-diaminopimeloyl-D-alanyl-D-alanine + UDP + H(+). It participates in cell wall biogenesis; peptidoglycan biosynthesis. Functionally, cell wall formation. Catalyzes the transfer of a GlcNAc subunit on undecaprenyl-pyrophosphoryl-MurNAc-pentapeptide (lipid intermediate I) to form undecaprenyl-pyrophosphoryl-MurNAc-(pentapeptide)GlcNAc (lipid intermediate II). In Magnetococcus marinus (strain ATCC BAA-1437 / JCM 17883 / MC-1), this protein is UDP-N-acetylglucosamine--N-acetylmuramyl-(pentapeptide) pyrophosphoryl-undecaprenol N-acetylglucosamine transferase.